Consider the following 497-residue polypeptide: NADH-quinone oxidoreductase subunit N (497 aa).

A run of 13 helical transmembrane segments spans residues Met12–Leu32, Pro40–Ile60, Ala80–Ala100, Leu116–Val136, Val166–Leu186, Leu208–Phe228, Pro240–Leu260, Met284–Leu304, Ser316–Ile336, Met341–Val361, Ala383–Ile403, Thr430–Phe450, and Leu457–Trp477.

Belongs to the complex I subunit 2 family. NDH-1 is composed of 14 different subunits. Subunits NuoA, H, J, K, L, M, N constitute the membrane sector of the complex.

Its subcellular location is the cell membrane. The catalysed reaction is a quinone + NADH + 5 H(+)(in) = a quinol + NAD(+) + 4 H(+)(out). In terms of biological role, NDH-1 shuttles electrons from NADH, via FMN and iron-sulfur (Fe-S) centers, to quinones in the respiratory chain. The immediate electron acceptor for the enzyme in this species is believed to be a menaquinone. Couples the redox reaction to proton translocation (for every two electrons transferred, four hydrogen ions are translocated across the cytoplasmic membrane), and thus conserves the redox energy in a proton gradient. The polypeptide is NADH-quinone oxidoreductase subunit N (Geobacillus kaustophilus (strain HTA426)).